A 224-amino-acid polypeptide reads, in one-letter code: Glycerol-3-phosphate acyltransferase (224 aa).

6 helical membrane-spanning segments follow: residues 14 to 34 (INMIFYIVAFLFGGIPFGWLL), 70 to 90 (YLSILTIILDATKGLIVVLGA), 99 to 119 (TQWSIALLAILGHCYSPYLGF), 129 to 149 (IGSVLLLIPVEGICGLIIWGI), 162 to 182 (LIGVLGTIGLTFVLPYILPLP), and 185 to 205 (ISIIKQINTHTPLVLIGLFIF).

Belongs to the PlsY family. As to quaternary structure, probably interacts with PlsX.

The protein resides in the cell inner membrane. It carries out the reaction an acyl phosphate + sn-glycerol 3-phosphate = a 1-acyl-sn-glycero-3-phosphate + phosphate. It functions in the pathway lipid metabolism; phospholipid metabolism. Functionally, catalyzes the transfer of an acyl group from acyl-phosphate (acyl-PO(4)) to glycerol-3-phosphate (G3P) to form lysophosphatidic acid (LPA). This enzyme utilizes acyl-phosphate as fatty acyl donor, but not acyl-CoA or acyl-ACP. This Helicobacter hepaticus (strain ATCC 51449 / 3B1) protein is Glycerol-3-phosphate acyltransferase.